A 101-amino-acid polypeptide reads, in one-letter code: MIPGELVIDDGEHTLNAGRHTIALVVANTGDRPVQVGSHYHFHEVNDALSFDRAAARGFRLNIAAGTAVRFEPGQTRTIELVELGGARAVYGFQGKVMGPL.

This sequence belongs to the urease beta subunit family. Heterotrimer of UreA (gamma), UreB (beta) and UreC (alpha) subunits. Three heterotrimers associate to form the active enzyme.

Its subcellular location is the cytoplasm. The catalysed reaction is urea + 2 H2O + H(+) = hydrogencarbonate + 2 NH4(+). The protein operates within nitrogen metabolism; urea degradation; CO(2) and NH(3) from urea (urease route): step 1/1. The chain is Urease subunit beta from Burkholderia pseudomallei (strain 668).